The following is a 75-amino-acid chain: Protein Tlp homolog (75 aa).

The segment at 52–75 (RREALDGMREEIKDEARDKKNGYM) is disordered.

This sequence belongs to the Tlp family.

This Clostridium botulinum (strain Okra / Type B1) protein is Protein Tlp homolog.